A 244-amino-acid polypeptide reads, in one-letter code: ATP synthase subunit a (244 aa).

7 helical membrane-spanning segments follow: residues 20–40 (FFDISITTITVYLGLLMVIVI), 81–101 (GILFFPFIMSLFLFVLTLNVM), 113–133 (QLLVTFTLAITIMIGITIWGF), 140–160 (FLNIFVPSGIEPWLLPLLVFI), 176–196 (LFANMLAGHLLIHIIGVAAIY), 202–222 (FIGILPWICVIAFMFLELGIA), and 223–243 (FLQAYVFVLLTLIYIANIINL).

The protein belongs to the ATPase A chain family. As to quaternary structure, F-type ATPases have 2 components, CF(1) - the catalytic core - and CF(0) - the membrane proton channel. CF(1) has five subunits: alpha(3), beta(3), gamma(1), delta(1), epsilon(1). CF(0) has three main subunits: a, b and c.

The protein localises to the mitochondrion inner membrane. Mitochondrial membrane ATP synthase (F(1)F(0) ATP synthase or Complex V) produces ATP from ADP in the presence of a proton gradient across the membrane which is generated by electron transport complexes of the respiratory chain. F-type ATPases consist of two structural domains, F(1) - containing the extramembraneous catalytic core and F(0) - containing the membrane proton channel, linked together by a central stalk and a peripheral stalk. During catalysis, ATP synthesis in the catalytic domain of F(1) is coupled via a rotary mechanism of the central stalk subunits to proton translocation. Key component of the proton channel; it may play a direct role in the translocation of protons across the membrane. The polypeptide is ATP synthase subunit a (atp6) (Dictyostelium discoideum (Social amoeba)).